The chain runs to 245 residues: 1-(5-phosphoribosyl)-5-[(5-phosphoribosylamino)methylideneamino] imidazole-4-carboxamide isomerase (245 aa).

The active-site Proton acceptor is aspartate 8. Aspartate 131 functions as the Proton donor in the catalytic mechanism.

This sequence belongs to the HisA/HisF family.

It is found in the cytoplasm. It catalyses the reaction 1-(5-phospho-beta-D-ribosyl)-5-[(5-phospho-beta-D-ribosylamino)methylideneamino]imidazole-4-carboxamide = 5-[(5-phospho-1-deoxy-D-ribulos-1-ylimino)methylamino]-1-(5-phospho-beta-D-ribosyl)imidazole-4-carboxamide. Its pathway is amino-acid biosynthesis; L-histidine biosynthesis; L-histidine from 5-phospho-alpha-D-ribose 1-diphosphate: step 4/9. The protein is 1-(5-phosphoribosyl)-5-[(5-phosphoribosylamino)methylideneamino] imidazole-4-carboxamide isomerase of Neisseria gonorrhoeae (strain ATCC 700825 / FA 1090).